The following is a 263-amino-acid chain: MRRQEAGTSSLATRVGPEVLTTAAVASVTGCDDPLAAVLLGRPKVIEVLQRSAELIDRVPALAAAHHQIADYHAMRSRFFDAYLADAAAEGIRQCVVLAAGLDTRAFRLPWPDGMTVFEIDQPTVLRYKENALTAHGARPAAAWHPVGVESDMPWPRRLWESGFNHNEPTIWLAEGLLPLPDATQDALISEIDGLSAAGSRIAFDDVLGMCSGRSDAPGWLTSRGWWTDVVEARHLPGLSGRRDDDAQSYTAHAALVTAEKIA.

S-adenosyl-L-methionine-binding positions include Asp121 and 150 to 151 (ES).

It belongs to the UPF0677 family.

Exhibits S-adenosyl-L-methionine-dependent methyltransferase activity. The chain is Putative S-adenosyl-L-methionine-dependent methyltransferase Mjls_0079 from Mycobacterium sp. (strain JLS).